A 353-amino-acid chain; its full sequence is Vomeronasal type-1 receptor 1 (353 aa).

The Extracellular portion of the chain corresponds to 1–56 (MVGDTLKLLSPLMTRYFFLLFYSTDSSDLNENQHPLDFDEMAFGKVKSGISFLIQT). A helical transmembrane segment spans residues 57-77 (GVGILGNSFLLCFYNLILFTG). Residues 78–84 (HKLRPTD) lie on the Cytoplasmic side of the membrane. Residues 85–105 (LILSHLALANSMVLFFKGIPQ) traverse the membrane as a helical segment. Residues 106-132 (TMAAFGLKYLLNDTGCKFVFYYHRVGT) lie on the Extracellular side of the membrane. An N-linked (GlcNAc...) asparagine glycan is attached at N117. A helical membrane pass occupies residues 133–153 (RVSLSTICLLNGFQAIKLNPS). Over 154–169 (ICRWMEIKIRSPRFID) the chain is Cytoplasmic. A helical membrane pass occupies residues 170-190 (FCCLLCWVPHVLMNASVLLLV). Over 191–226 (NGPLNSKNSSAKNNYGYCSYKASKRFSSLHAVLYFS) the chain is Extracellular. N198 carries an N-linked (GlcNAc...) asparagine glycan. The helical transmembrane segment at 227–247 (PDFMSLGFMVWASGSMVFFLY) threads the bilayer. At 248–274 (RHKQQVQHNHSNRLSCRPSQETRATRT) the chain is on the cytoplasmic side. The chain crosses the membrane as a helical span at residues 275–295 (IMVLVSSFFVFYSVHSFLTIW). At 296–303 (TTVVANPG) the chain is on the extracellular side. A helical membrane pass occupies residues 304 to 324 (QWIVNNSVLVASYFPSRSPFV). Residues 325 to 353 (LIMSDTRISQFCFACRTRKTLFPNLVVMP) lie on the Cytoplasmic side of the membrane.

The protein belongs to the G-protein coupled receptor 1 family.

It is found in the cell membrane. Functionally, putative pheromone receptor. The chain is Vomeronasal type-1 receptor 1 (VN1R1) from Gorilla gorilla gorilla (Western lowland gorilla).